The chain runs to 361 residues: Histidinol-phosphate aminotransferase (361 aa).

Lys223 carries the post-translational modification N6-(pyridoxal phosphate)lysine.

The protein belongs to the class-II pyridoxal-phosphate-dependent aminotransferase family. Histidinol-phosphate aminotransferase subfamily. As to quaternary structure, homodimer. Pyridoxal 5'-phosphate serves as cofactor.

The catalysed reaction is L-histidinol phosphate + 2-oxoglutarate = 3-(imidazol-4-yl)-2-oxopropyl phosphate + L-glutamate. It functions in the pathway amino-acid biosynthesis; L-histidine biosynthesis; L-histidine from 5-phospho-alpha-D-ribose 1-diphosphate: step 7/9. The chain is Histidinol-phosphate aminotransferase from Deinococcus radiodurans (strain ATCC 13939 / DSM 20539 / JCM 16871 / CCUG 27074 / LMG 4051 / NBRC 15346 / NCIMB 9279 / VKM B-1422 / R1).